The primary structure comprises 242 residues: 3-deoxy-manno-octulosonate cytidylyltransferase (242 aa).

This sequence belongs to the KdsB family.

It is found in the cytoplasm. The catalysed reaction is 3-deoxy-alpha-D-manno-oct-2-ulosonate + CTP = CMP-3-deoxy-beta-D-manno-octulosonate + diphosphate. Its pathway is nucleotide-sugar biosynthesis; CMP-3-deoxy-D-manno-octulosonate biosynthesis; CMP-3-deoxy-D-manno-octulosonate from 3-deoxy-D-manno-octulosonate and CTP: step 1/1. It functions in the pathway bacterial outer membrane biogenesis; lipopolysaccharide biosynthesis. Its function is as follows. Activates KDO (a required 8-carbon sugar) for incorporation into bacterial lipopolysaccharide in Gram-negative bacteria. In Anaeromyxobacter dehalogenans (strain 2CP-1 / ATCC BAA-258), this protein is 3-deoxy-manno-octulosonate cytidylyltransferase.